A 756-amino-acid chain; its full sequence is Polyribonucleotide nucleotidyltransferase (756 aa).

The Mg(2+) site is built by aspartate 532 and aspartate 538. The KH domain maps to 598–657 (PRVTAIKVPVDKIGEVIGPKGKMINSITEQTGANISIEDDGTVFVGATDGPSAQAAIDMI). The 70-residue stretch at 669–738 (GERFLGTVVK…ARGKISLIPV (70 aa)) folds into the S1 motif domain.

Belongs to the polyribonucleotide nucleotidyltransferase family. The cofactor is Mg(2+).

The protein localises to the cytoplasm. The catalysed reaction is RNA(n+1) + phosphate = RNA(n) + a ribonucleoside 5'-diphosphate. Involved in mRNA degradation. Catalyzes the phosphorolysis of single-stranded polyribonucleotides processively in the 3'- to 5'-direction. This is Polyribonucleotide nucleotidyltransferase from Rhodococcus erythropolis (strain PR4 / NBRC 100887).